Consider the following 103-residue polypeptide: Large ribosomal subunit protein uL24 (103 aa).

It belongs to the universal ribosomal protein uL24 family. As to quaternary structure, part of the 50S ribosomal subunit.

One of two assembly initiator proteins, it binds directly to the 5'-end of the 23S rRNA, where it nucleates assembly of the 50S subunit. Functionally, one of the proteins that surrounds the polypeptide exit tunnel on the outside of the subunit. In Geobacillus stearothermophilus (Bacillus stearothermophilus), this protein is Large ribosomal subunit protein uL24.